Consider the following 333-residue polypeptide: UPF0284 protein TGAM_0534 (333 aa).

Belongs to the UPF0284 family.

This Thermococcus gammatolerans (strain DSM 15229 / JCM 11827 / EJ3) protein is UPF0284 protein TGAM_0534.